Consider the following 610-residue polypeptide: MGNSHCVPQAPRRLRASFSRKPSLKGNREDSARKLAGLFGTEARPDGDTAANRIFHYIPGTDIPGPEHHPENLEQPFLSVFKKGWRRTPVRNLGKVVHYSKVRLRFQHSQDISDCYLELFPSHLYFQAHGSEGLTFQGLLPLTELNICPTDGSREHAFQITGPLPAPLLVLCHSEAELSHWLYHLEKQMALLGLQRCHSAPPQGSLGDKPPWTQLRRAYGCGSMSGAICASRVKLQHLPSQEQWDRLLVLYPASLAIFSEEPEGLSFKGELPLSAIHINLEEKEKEIRSFLIEGHLINTIRVVCASYEDYSQWLLCLRTVSRRDGAHLPPGPESFPGLQKPTQLVGRGRGSLSSNGRSSWKLECPVFPTSQSLPESSVPTTIGFPAPPVPNQTDSNCVSTGQKKMKPSDSSPSPRGRAQREVSGSTVPLPLPLDLTKMSALNLDSGPEAQDHSLDIPHSPLYADPYTPPATSRHKITDIQGLDEFLCAIQTSPGPDLSSPFPPVSVSVPVSESSSGISSSPGPLGSHLLTKKGALQPRASQRHRGSFKSRGPQPSDFPQLVTPAREGKPSSLPPPPDEEAPIWNKTSSPSHPKWPQPRKPAVEGGFIQWI.

The interval 1–30 (MGNSHCVPQAPRRLRASFSRKPSLKGNRED) is disordered. Gly-2 carries the N-myristoyl glycine lipid modification. Residues 61–100 (TDIPGPEHHPENLEQPFLSVFKKGWRRTPVRNLGKVVHYS) are interaction with C1QBP. PH domains lie at 96–192 (VVHY…MALL) and 227–324 (AICA…SRRD). At Tyr-307 the chain carries Phosphotyrosine. Disordered stretches follow at residues 327–357 (HLPP…SNGR), 371–431 (QSLP…PLPL), 443–473 (LDSG…ATSR), and 493–610 (PGPD…IQWI). 2 stretches are compositionally biased toward polar residues: residues 371-380 (QSLPESSVPT) and 391-402 (NQTDSNCVSTGQ). Residue Tyr-462 is modified to Phosphotyrosine. Positions 504 to 526 (VSVSVPVSESSSGISSSPGPLGS) are enriched in low complexity.

In terms of assembly, found in a complex with cytochrome c mRNA and various ribosomal proteins. Interacts with C1QBP, ELAVL1 and BID. Phosphorylation is essential for its mitochondrial localization and regulates its interaction with C1QBP. As to expression, testis and adipose tissue (at protein level). Ubiquitous.

It is found in the cell membrane. Its subcellular location is the mitochondrion membrane. The protein localises to the mitochondrion. In terms of biological role, controls the stability of the leptin mRNA harboring an AU-rich element (ARE) in its 3' UTR, in cooperation with the RNA stabilizer ELAVL1. Decreases the stability of the leptin mRNA by antagonizing the function of ELAVL1 by inducing its atypical recruitment from the nucleus to the cytosol. Binds to cardiolipin (CL), phosphatidic acid (PA), phosphatidylinositol 4-phosphate (PtdIns(4)P) and phosphatidylserine (PS). The sequence is that of Probable pleckstrin homology domain-containing family N member 1 (Plekhn1) from Mus musculus (Mouse).